The chain runs to 243 residues: UPF0758 protein PCC7424_2073 (243 aa).

An MPN domain is found at 112–235 (VEINDPVSAV…HQSLRTVTDL (124 aa)). Residues histidine 184, histidine 186, and aspartate 197 each coordinate Zn(2+). The short motif at 184 to 197 (HNHPSGNVAPSQED) is the JAMM motif element.

The protein belongs to the UPF0758 family.

The polypeptide is UPF0758 protein PCC7424_2073 (Gloeothece citriformis (strain PCC 7424) (Cyanothece sp. (strain PCC 7424))).